The sequence spans 332 residues: Azadirone synthase LFS (332 aa).

Positions 181–286 constitute a Fe2OG dioxygenase domain; that stretch reads ANANYTNMFH…RYSTGTFICP (106 aa). Fe cation-binding residues include His-208, Asp-210, and His-269. Arg-277 is a binding site for 2-oxoglutarate.

The protein belongs to the iron/ascorbate-dependent oxidoreductase family. Fe(2+) is required as a cofactor. Mainly expressed in petioles and, to a lower extent, in roots.

It catalyses the reaction (1S,3bR,4R,5aR,9aR,9bR,11aS)-1-(1-hydroxy-4-oxobutan-2-yl)-3b,6,6,9a,11a-pentamethyl-7-oxo-1H,2H,3bH,4H,5H,5aH,6H,7H,9aH,9bH,10H,11H,11aH-cyclopenta[a]phenanthren-4-yl acetate + 2-oxoglutarate + O2 = azadirone + succinate + CO2 + 2 H2O. Its pathway is secondary metabolite biosynthesis; terpenoid biosynthesis. Functionally, 2-oxoglutarate-Fe(II) type oxidoreductase involved in the biosynthesis of limonoids triterpene natural products such as azadirachtin, an antifeedant widely used as bioinsecticide, and possessing many medicinal applications including anti-tumoral, anti-malarial, anti-rheumatic, antibacterial, anti-inflammatory, anti-pyretic and diuretic effects. Catalyzes the formation of azadirone. In Melia azedarach (Chinaberry tree), this protein is Azadirone synthase LFS.